The primary structure comprises 1000 residues: Isoleucine--tRNA ligase, mitochondrial (1000 aa).

The transit peptide at 1 to 27 directs the protein to the mitochondrion; sequence MLGAWRAAPRLRLRARFGVASVWARSA. A 'HIGH' region motif is present at residues 102–112; sequence PYANGDPHVGH. Residues Lys649 and Lys652 each contribute to the ATP site. Residues 649-653 carry the 'KMSKS' region motif; sequence KMSKS.

Belongs to the class-I aminoacyl-tRNA synthetase family.

The protein resides in the mitochondrion matrix. The catalysed reaction is tRNA(Ile) + L-isoleucine + ATP = L-isoleucyl-tRNA(Ile) + AMP + diphosphate. Its function is as follows. Aminoacyl-tRNA synthetase that catalyzes the specific attachment of isoleucine to its cognate tRNA (tRNA(Ile)). This chain is Isoleucine--tRNA ligase, mitochondrial (IARS2), found in Gallus gallus (Chicken).